The sequence spans 302 residues: CRISPR-associated endonuclease Cas1 1 (302 aa).

Positions 159, 219, and 234 each coordinate Mn(2+).

This sequence belongs to the CRISPR-associated endonuclease Cas1 family. In terms of assembly, homodimer, forms a heterotetramer with a Cas2 homodimer. Mg(2+) serves as cofactor. Mn(2+) is required as a cofactor.

Functionally, CRISPR (clustered regularly interspaced short palindromic repeat), is an adaptive immune system that provides protection against mobile genetic elements (viruses, transposable elements and conjugative plasmids). CRISPR clusters contain spacers, sequences complementary to antecedent mobile elements, and target invading nucleic acids. CRISPR clusters are transcribed and processed into CRISPR RNA (crRNA). Acts as a dsDNA endonuclease. Involved in the integration of spacer DNA into the CRISPR cassette. The sequence is that of CRISPR-associated endonuclease Cas1 1 from Pyrobaculum aerophilum (strain ATCC 51768 / DSM 7523 / JCM 9630 / CIP 104966 / NBRC 100827 / IM2).